Here is a 163-residue protein sequence, read N- to C-terminus: Nucleotide-binding protein NT01EI_1072 (163 aa).

The protein belongs to the YajQ family.

In terms of biological role, nucleotide-binding protein. The sequence is that of Nucleotide-binding protein NT01EI_1072 from Edwardsiella ictaluri (strain 93-146).